A 300-amino-acid polypeptide reads, in one-letter code: Cation-efflux pump FieF (300 aa).

The next 4 membrane-spanning stretches (helical) occupy residues 12–32 (AAIA…FAWW), 39–59 (ILAA…NLLV), 82–102 (AALA…LTGI), and 114–134 (PGVG…LVSF). Positions 45 and 49 each coordinate Zn(2+). His-153 and Asp-157 together coordinate Zn(2+). Helical transmembrane passes span 156–176 (SDVM…YGWH) and 178–198 (ADAL…LRMG).

The protein belongs to the cation diffusion facilitator (CDF) transporter (TC 2.A.4) family. FieF subfamily. Homodimer.

It localises to the cell inner membrane. It catalyses the reaction Zn(2+)(in) + H(+)(out) = Zn(2+)(out) + H(+)(in). The enzyme catalyses Cd(2+)(in) + H(+)(out) = Cd(2+)(out) + H(+)(in). The catalysed reaction is Fe(2+)(in) + H(+)(out) = Fe(2+)(out) + H(+)(in). Functionally, divalent metal cation transporter which exports Zn(2+), Cd(2+) and possibly Fe(2+). May be involved in zinc and iron detoxification by efflux. This Escherichia coli O127:H6 (strain E2348/69 / EPEC) protein is Cation-efflux pump FieF.